The chain runs to 72 residues: Large ribosomal subunit protein bL31 (72 aa).

Zn(2+)-binding residues include C16, C18, C38, and C41.

Belongs to the bacterial ribosomal protein bL31 family. Type A subfamily. As to quaternary structure, part of the 50S ribosomal subunit. The cofactor is Zn(2+).

Functionally, binds the 23S rRNA. The protein is Large ribosomal subunit protein bL31 of Vibrio atlanticus (strain LGP32) (Vibrio splendidus (strain Mel32)).